Here is a 444-residue protein sequence, read N- to C-terminus: Glycine receptor subunit alphaZ1 (444 aa).

The signal sequence occupies residues 1–24 (MFALGIYLWETIVFFSLAASQQAA). The Extracellular segment spans residues 25–246 (ARKAASPMPP…RFHLERQMGY (222 aa)). N-linked (GlcNAc...) asparagine glycosylation is present at Asn62. Glycine-binding residues include Arg89 and Ser153. A disulfide bridge connects residues Cys162 and Cys176. Zn(2+) contacts are provided by Glu216 and Asp218. Cysteines 222 and 233 form a disulfide. 226–231 (YNTGKF) contributes to the strychnine binding site. Thr228 contacts glycine. Residue His239 coordinates Zn(2+). The chain crosses the membrane as a helical span at residues 247–268 (YLIQMYIPSLLIVILSWVSFWI). Residues 269 to 273 (NMDAA) are Cytoplasmic-facing. The helical transmembrane segment at 274–294 (PARVGLGITTVLTMTTQSSGS) threads the bilayer. Residues 295 to 305 (RASLPKVSYVK) lie on the Extracellular side of the membrane. Residues 306–326 (AIDIWMAVCLLFVFSALLEYA) traverse the membrane as a helical segment. The Cytoplasmic segment spans residues 327–412 (AVNFIARQHK…FISRAKRIDT (86 aa)). The chain crosses the membrane as a helical span at residues 413–433 (VSRVAFPLVFLIFNIFYWITY). Residues 434–444 (KIIRSEDIHKQ) lie on the Extracellular side of the membrane.

This sequence belongs to the ligand-gated ion channel (TC 1.A.9) family. Glycine receptor (TC 1.A.9.3) subfamily. GLRA1 sub-subfamily. As to quaternary structure, homopentamer (in vitro). Heteropentamer composed of glra1 and glrb. Both homopentamers and heteropentamers form functional ion channels. Interacts with glrb. As to expression, expressed in brain.

It localises to the postsynaptic cell membrane. Its subcellular location is the synapse. It is found in the perikaryon. The protein localises to the cell projection. The protein resides in the dendrite. It localises to the cell membrane. The enzyme catalyses chloride(in) = chloride(out). Its activity is regulated as follows. Activated by glycine and taurine. Inhibited by strychnine. Allosterically activated by ivermectin. Inhibited by picrotoxinin. Strychnine binding locks the channel in a closed conformation and prevents channel opening in response to extracellular glycine. Can also be activated by GABA and inhibited by bicuculline, but this requires heterologous expression in human cells. Functionally, subunit of heteromeric glycine-gated chloride channels. Plays an important role in the down-regulation of neuronal excitability. Contributes to the generation of inhibitory postsynaptic currents. Channel activity is potentiated by ethanol. This chain is Glycine receptor subunit alphaZ1 (glra1), found in Danio rerio (Zebrafish).